We begin with the raw amino-acid sequence, 409 residues long: Na(+)-translocating NADH-quinone reductase subunit F (409 aa).

Residues 5 to 25 traverse the membrane as a helical segment; sequence FIFGIIAFTALVLVLAVIILF. The 2Fe-2S ferredoxin-type domain occupies 34–128; the sequence is GDITISINND…SMDVELPEEI (95 aa). The [2Fe-2S] cluster site is built by Cys71, Cys77, Cys80, and Cys112. In terms of domain architecture, FAD-binding FR-type spans 131–271; it reads VKKWECTVIS…SGPFGEFFAK (141 aa).

The protein belongs to the NqrF family. In terms of assembly, composed of six subunits; NqrA, NqrB, NqrC, NqrD, NqrE and NqrF. [2Fe-2S] cluster is required as a cofactor. Requires FAD as cofactor.

Its subcellular location is the cell inner membrane. The enzyme catalyses a ubiquinone + n Na(+)(in) + NADH + H(+) = a ubiquinol + n Na(+)(out) + NAD(+). In terms of biological role, NQR complex catalyzes the reduction of ubiquinone-1 to ubiquinol by two successive reactions, coupled with the transport of Na(+) ions from the cytoplasm to the periplasm. The first step is catalyzed by NqrF, which accepts electrons from NADH and reduces ubiquinone-1 to ubisemiquinone by a one-electron transfer pathway. The polypeptide is Na(+)-translocating NADH-quinone reductase subunit F (Actinobacillus pleuropneumoniae serotype 5b (strain L20)).